A 438-amino-acid chain; its full sequence is Glutamate-1-semialdehyde 2,1-aminomutase (438 aa).

Lysine 277 bears the N6-(pyridoxal phosphate)lysine mark.

Belongs to the class-III pyridoxal-phosphate-dependent aminotransferase family. HemL subfamily. Homodimer. Pyridoxal 5'-phosphate serves as cofactor.

The protein resides in the cytoplasm. It catalyses the reaction (S)-4-amino-5-oxopentanoate = 5-aminolevulinate. The protein operates within porphyrin-containing compound metabolism; protoporphyrin-IX biosynthesis; 5-aminolevulinate from L-glutamyl-tRNA(Glu): step 2/2. It functions in the pathway porphyrin-containing compound metabolism; chlorophyll biosynthesis. This Synechococcus sp. (strain CC9311) protein is Glutamate-1-semialdehyde 2,1-aminomutase.